Here is a 315-residue protein sequence, read N- to C-terminus: NAD-dependent protein lipoamidase sirtuin-4, mitochondrial (315 aa).

The transit peptide at 1 to 29 (MRMSFGLTFKRTAKVHWRANFSQQCSLRS) directs the protein to the mitochondrion. One can recognise a Deacetylase sirtuin-type domain in the interval 38–315 (PPLDPEKVKE…GELLPLIDPR (278 aa)). NAD(+) is bound by residues 63–83 (GAGISTESGIPDYRSEKVGLY) and 144–147 (QNVD). The active-site Proton acceptor is the H162. Zn(2+)-binding residues include C170, C173, C221, and C224. Residues 261 to 263 (GSS), 287 to 289 (NIG), and C305 contribute to the NAD(+) site.

It belongs to the sirtuin family. Class II subfamily. In terms of assembly, interacts with GLUD1, IDE and SLC25A5. Interacts with DLAT and PDHX. Interacts with MCCC1 (via the biotin carboxylation domain). Interacts with PCCA and PC. Zn(2+) is required as a cofactor.

Its subcellular location is the mitochondrion matrix. The catalysed reaction is N(6)-[(R)-lipoyl]-L-lysyl-[protein] + NAD(+) + H2O = 2''-O-lipoyl-ADP-D-ribose + nicotinamide + L-lysyl-[protein]. It catalyses the reaction N(6)-biotinyl-L-lysyl-[protein] + NAD(+) + H2O = 2''-O-biotinyl-ADP-D-ribose + nicotinamide + L-lysyl-[protein]. The enzyme catalyses N(6)-acetyl-L-lysyl-[protein] + NAD(+) + H2O = 2''-O-acetyl-ADP-D-ribose + nicotinamide + L-lysyl-[protein]. It carries out the reaction L-cysteinyl-[protein] + NAD(+) = S-(ADP-D-ribosyl)-L-cysteinyl-[protein] + nicotinamide + H(+). In terms of biological role, acts as a NAD-dependent protein lipoamidase, biotinylase, deacetylase and ADP-ribosyl transferase. Catalyzes more efficiently removal of lipoyl- and biotinyl- than acetyl-lysine modifications. Inhibits the pyruvate dehydrogenase complex (PDH) activity via the enzymatic hydrolysis of the lipoamide cofactor from the E2 component, DLAT, in a phosphorylation-independent manner. Catalyzes the transfer of ADP-ribosyl groups onto target proteins, including mitochondrial GLUD1, inhibiting GLUD1 enzyme activity. Acts as a negative regulator of mitochondrial glutamine metabolism by mediating mono ADP-ribosylation of GLUD1: expressed in response to DNA damage and negatively regulates anaplerosis by inhibiting GLUD1, leading to block metabolism of glutamine into tricarboxylic acid cycle and promoting cell cycle arrest. In response to mTORC1 signal, SIRT4 expression is repressed, promoting anaplerosis and cell proliferation. Acts as a tumor suppressor. Also acts as a NAD-dependent protein deacetylase: mediates deacetylation of 'Lys-471' of MLYCD, inhibiting its activity, thereby acting as a regulator of lipid homeostasis. Does not seem to deacetylate PC. Controls fatty acid oxidation by inhibiting PPARA transcriptional activation. Impairs SIRT1-PPARA interaction probably through the regulation of NAD(+) levels. Down-regulates insulin secretion. This is NAD-dependent protein lipoamidase sirtuin-4, mitochondrial from Bos taurus (Bovine).